The following is an 81-amino-acid chain: Photosystem I iron-sulfur center (81 aa).

4Fe-4S ferredoxin-type domains are found at residues 1-31 (MSHS…MVPW) and 39-68 (IASS…IRVY). [4Fe-4S] cluster-binding residues include Cys11, Cys14, Cys17, Cys21, Cys48, Cys51, Cys54, and Cys58.

The cyanobacterial PSI reaction center is composed of one copy each of PsaA,B,C,D,E,F,I,J,K,L,M and X, and forms trimeric complexes. [4Fe-4S] cluster serves as cofactor.

The protein localises to the cellular thylakoid membrane. It catalyses the reaction reduced [plastocyanin] + hnu + oxidized [2Fe-2S]-[ferredoxin] = oxidized [plastocyanin] + reduced [2Fe-2S]-[ferredoxin]. Functionally, apoprotein for the two 4Fe-4S centers FA and FB of photosystem I (PSI); essential for photochemical activity. FB is the terminal electron acceptor of PSI, donating electrons to ferredoxin. The C-terminus interacts with PsaA/B/D and helps assemble the protein into the PSI complex. Required for binding of PsaD and PsaE to PSI. PSI is a plastocyanin/cytochrome c6-ferredoxin oxidoreductase, converting photonic excitation into a charge separation, which transfers an electron from the donor P700 chlorophyll pair to the spectroscopically characterized acceptors A0, A1, FX, FA and FB in turn. This Microcystis aeruginosa (strain NIES-843 / IAM M-2473) protein is Photosystem I iron-sulfur center.